The sequence spans 269 residues: Phosphate import ATP-binding protein PstB (269 aa).

The ABC transporter domain occupies 21-264; it reads SEVRNLSFYY…PKNKQTEDYI (244 aa). ATP is bound at residue 53–60; sequence GPSGCGKS.

It belongs to the ABC transporter superfamily. Phosphate importer (TC 3.A.1.7) family. As to quaternary structure, the complex is composed of two ATP-binding proteins (PstB), two transmembrane proteins (PstC and PstA) and a solute-binding protein (PstS).

It is found in the cell inner membrane. The enzyme catalyses phosphate(out) + ATP + H2O = ADP + 2 phosphate(in) + H(+). Its function is as follows. Part of the ABC transporter complex PstSACB involved in phosphate import. Responsible for energy coupling to the transport system. This is Phosphate import ATP-binding protein PstB from Nitrosospira multiformis (strain ATCC 25196 / NCIMB 11849 / C 71).